The primary structure comprises 136 residues: Holo-[acyl-carrier-protein] synthase (136 aa).

Residues D8 and E57 each contribute to the Mg(2+) site.

This sequence belongs to the P-Pant transferase superfamily. AcpS family. The cofactor is Mg(2+).

Its subcellular location is the cytoplasm. It carries out the reaction apo-[ACP] + CoA = holo-[ACP] + adenosine 3',5'-bisphosphate + H(+). Its function is as follows. Transfers the 4'-phosphopantetheine moiety from coenzyme A to a Ser of acyl-carrier-protein. The chain is Holo-[acyl-carrier-protein] synthase from Methylobacterium radiotolerans (strain ATCC 27329 / DSM 1819 / JCM 2831 / NBRC 15690 / NCIMB 10815 / 0-1).